Here is a 115-residue protein sequence, read N- to C-terminus: Large ribosomal subunit protein bL21 (115 aa).

The protein belongs to the bacterial ribosomal protein bL21 family. As to quaternary structure, part of the 50S ribosomal subunit. Contacts protein L20.

This protein binds to 23S rRNA in the presence of protein L20. This is Large ribosomal subunit protein bL21 from Coxiella burnetii (strain RSA 331 / Henzerling II).